The primary structure comprises 98 residues: Bombyxin A-3 homolog (98 aa).

A signal peptide spans 1 to 18 (MRTQVLFLVLEVAAMASG). Disulfide bonds link C26-C85, C38-C98, and C84-C89. A propeptide spans 47–75 (TPYTSSESEGYGWRWLAPQRARQLAGARG) (c peptide like).

Belongs to the insulin family. As to quaternary structure, heterodimer of a B chain and an A chain linked by two disulfide bonds.

Its subcellular location is the secreted. Functionally, brain peptide responsible for activation of prothoracic glands to produce ecdysone in insects. This Samia cynthia (Ailanthus silkmoth) protein is Bombyxin A-3 homolog (SBXA3).